An 82-amino-acid chain; its full sequence is Conotoxin Gla-TxX (82 aa).

The N-terminal stretch at M1–C25 is a signal peptide. 4-carboxyglutamate occurs at positions 30, 34, 37, 40, and 41. At N72 the chain carries Asparagine amide. A propeptide spanning residues L77–K82 is cleaved from the precursor.

Contains 4 disulfide bonds. Expressed by the venom duct.

The protein localises to the secreted. In Conus textile (Cloth-of-gold cone), this protein is Conotoxin Gla-TxX.